The following is an 82-amino-acid chain: Putative Fe(2+) transport protein A (82 aa).

Belongs to the FeoA family.

Its function is as follows. Might be involved in Fe(2+) ion uptake. The polypeptide is Putative Fe(2+) transport protein A (Leptolyngbya boryana (Plectonema boryanum)).